We begin with the raw amino-acid sequence, 378 residues long: Cyclic di-GMP phosphodiesterase response regulator RpfG (378 aa).

In terms of domain architecture, Response regulatory spans asparagine 29 to leucine 147. A 4-aspartylphosphate modification is found at aspartate 80. In terms of domain architecture, HD-GYP spans valine 174 to threonine 371.

In terms of assembly, interacts with a subset of GGDEF domain-containing proteins. Post-translationally, phosphorylated and activated by RpfC.

The protein resides in the cytoplasm. The catalysed reaction is 3',3'-c-di-GMP + 2 H2O = 2 GMP + 2 H(+). In terms of biological role, member of the two-component regulatory system RpfG/RpfC, which is involved in the perception and response to the diffusible signaling factor (DSF), which is essential for cell-cell signaling. Detection of DSF leads to the positive regulation of biofilm dispersal and the production of virulence factors. Activated RpfG degrades cyclic di-GMP to GMP, leading to the activation of Clp, a global transcriptional regulator that regulates a large set of genes in DSF pathway. May also directly control genes involved in biofilm dispersal. The chain is Cyclic di-GMP phosphodiesterase response regulator RpfG (rpfG) from Xanthomonas campestris pv. campestris (strain 8004).